The sequence spans 102 residues: Small ribosomal subunit protein uS10 (102 aa).

The protein belongs to the universal ribosomal protein uS10 family. Part of the 30S ribosomal subunit.

In terms of biological role, involved in the binding of tRNA to the ribosomes. In Pediococcus pentosaceus (strain ATCC 25745 / CCUG 21536 / LMG 10740 / 183-1w), this protein is Small ribosomal subunit protein uS10.